A 924-amino-acid chain; its full sequence is Intercellular adhesion molecule 5 (924 aa).

Residues 1 to 31 form the signal peptide; that stretch reads MPGPSPGLRRALLGLWAALGLGLFGLSAVSQ. Topologically, residues 32–835 are extracellular; it reads EPFWADLQPR…RITVRVAGPW (804 aa). Ig-like C2-type domains lie at 48-130, 135-235, 242-329, 337-402, 408-486, 491-568, 573-662, 666-739, and 746-830; these read GGSL…PLPP, GENF…RLAA, GSER…LLTL, GQMV…SAEL, PRLD…VTLT, PALD…VAVT, PRFE…VVSA, PEMD…RTVT, and PVVA…ITVR. An N-linked (GlcNAc...) (high mannose) asparagine glycan is attached at asparagine 54. Cystine bridges form between cysteine 55–cysteine 99 and cysteine 59–cysteine 103. Asparagine 74 and asparagine 137 each carry an N-linked (GlcNAc...) asparagine glycan. The cysteines at positions 142 and 198 are disulfide-linked. Threonine 182 and threonine 184 each carry phosphothreonine. 2 N-linked (GlcNAc...) asparagine glycosylation sites follow: asparagine 195 and asparagine 214. The cysteines at positions 249 and 302 are disulfide-linked. N-linked (GlcNAc...) asparagine glycosylation is found at asparagine 303, asparagine 316, asparagine 371, and asparagine 397. A disulfide bridge connects residues cysteine 344 and cysteine 383. Cystine bridges form between cysteine 415-cysteine 470, cysteine 498-cysteine 552, and cysteine 580-cysteine 645. N-linked (GlcNAc...) asparagine glycans are attached at residues asparagine 583 and asparagine 646. An intrachain disulfide couples cysteine 673 to cysteine 725. N-linked (GlcNAc...) asparagine glycans are attached at residues asparagine 764, asparagine 795, and asparagine 796. Cysteine 769 and cysteine 814 form a disulfide bridge. A helical transmembrane segment spans residues 836–856; sequence LWVAVGGAAGGAALLAAGAGL. The Cytoplasmic portion of the chain corresponds to 857–924; the sequence is AFYVQSTACK…EVFAIQLTSA (68 aa). Residues 891–903 show a composition bias toward gly residues; it reads AGGAAGAEGGPEA. The tract at residues 891–911 is disordered; that stretch reads AGGAAGAEGGPEAAGGAAESP.

It belongs to the immunoglobulin superfamily. ICAM family. Glycosylation at Asn-54 is critical for functional folding. As to expression, expressed on neurons in the most rostral segment of the mammalian brain, the telencephalon.

The protein resides in the membrane. In terms of biological role, ICAM proteins are ligands for the leukocyte adhesion protein LFA-1 (integrin alpha-L/beta-2). This chain is Intercellular adhesion molecule 5 (ICAM5), found in Homo sapiens (Human).